Consider the following 2157-residue polypeptide: Unconventional myosin-IXb (2157 aa).

N-acetylserine is present on Ser2. The Ras-associating domain occupies 15 to 114; sequence AAYHLHIYPQ…YYFLLQERNA (100 aa). The Myosin motor domain maps to 146-953; it reads ADFDDLCNLP…ERQALQETLH (808 aa). 239-246 contributes to the ATP binding site; the sequence is GESGSGKT. Residues 709-734 are disordered; sequence AEKAAGMSSPGAQSHPEELPRGASTP. Residues Ser716 and Ser717 each carry the phosphoserine modification. The interval 844-855 is actin-binding; the sequence is KAEPFFIRCIRS. The tract at residues 940 to 1044 is neck or regulatory domain; the sequence is LKETERQALQ…CRGHLQRKSF (105 aa). 4 IQ domains span residues 957–977, 979–1000, 1001–1023, and 1024–1053; these read VRKI…RHFL, MKRA…RALE, RTQA…LYRH, and QKQS…EKQK. Ser1045 is subject to Phosphoserine. The tail stretch occupies residues 1045–2157; that stretch reads SQMISEKQKA…LPPASGQTNG (1113 aa). Positions 1046–1071 form a coiled coil; sequence QMISEKQKAEEKEREALEAARAGAEE. 3 disordered regions span residues 1046–1298, 1320–1410, and 1455–1484; these read QMIS…TQIQ, AAAS…GSQV, and GLEA…KKNR. Composition is skewed to basic and acidic residues over residues 1050–1063, 1109–1122, 1136–1160, 1168–1183, and 1191–1201; these read EKQK…EALE, SPLE…EAPS, ESHE…EHVK, SCKE…RRVT, and LEDKKESREDE. Residues Ser1114, Ser1115, and Ser1122 each carry the phosphoserine modification. Polar residues predominate over residues 1211–1222; sequence ENTSQKQPTEQP. Residues Ser1242, Ser1253, Ser1261, and Ser1267 each carry the phosphoserine modification. Thr1271 bears the Phosphothreonine mark. A phosphoserine mark is found at Ser1290, Ser1323, and Ser1331. A Phosphothreonine modification is found at Thr1346. 3 positions are modified to phosphoserine: Ser1354, Ser1356, and Ser1405. Over residues 1467-1478 the composition is skewed to basic and acidic residues; sequence AAGEKRTKEPGG. Residues 1632-1681 form a Phorbol-ester/DAG-type zinc finger; that stretch reads GHVFASYQVSIPQSCEQCLSYIWLMDKALLCSVCKMTCHKKCVHKIQSHC. The Rho-GAP domain occupies 1703–1888; it reads DSLTSDKASV…MLIKEQMRKY (186 aa). The interval 1739–1744 is interaction with RHOA; the sequence is AANRTR. The stretch at 1880–1901 forms a coiled coil; that stretch reads LIKEQMRKYKVKMEEISQLEAA. Phosphoserine occurs at positions 1926, 1972, 1992, and 1999. The stretch at 1959–1989 forms a coiled coil; it reads EDREKEILIERIQSIKEEKEDITYRLPELDP. Residues 1980–1993 show a composition bias toward basic and acidic residues; it reads ITYRLPELDPRGSD. Positions 1980 to 2157 are disordered; it reads ITYRLPELDP…LPPASGQTNG (178 aa). A Phosphothreonine modification is found at Thr2005. Residues 2021 to 2037 are compositionally biased toward pro residues; the sequence is PPAPALPCPGAPTPSPL. At Ser2050 the chain carries Phosphoserine. Low complexity predominate over residues 2081–2093; the sequence is PRWAPGAREAAAP. Positions 2095-2106 are enriched in basic and acidic residues; sequence RRREPPARRPDQ. Position 2141 is a phosphoserine (Ser2141).

This sequence belongs to the TRAFAC class myosin-kinesin ATPase superfamily. Myosin family. Interacts (via IQ domains) with CALM. Interacts with RHOA. Interacts (via Rho-GAP domain) with ROBO1; this inhibits the interaction with RHOA and the stimulation of RHOA GTPase activity, and thereby increases the levels of active RHOA. In terms of tissue distribution, detected in peripheral blood leukocytes (at protein level). Expressed predominantly in peripheral blood leukocytes and at lower levels, in thymus, spleen, testis, prostate, ovary, brain, small intestine and lung.

It localises to the cytoplasm. The protein localises to the cell cortex. It is found in the perinuclear region. The protein resides in the cytoskeleton. Myosins are actin-based motor molecules with ATPase activity. Unconventional myosins serve in intracellular movements. Binds actin with high affinity both in the absence and presence of ATP and its mechanochemical activity is inhibited by calcium ions. Also acts as a GTPase activator for RHOA. Plays a role in the regulation of cell migration via its role as RHOA GTPase activator. This is regulated by its interaction with the SLIT2 receptor ROBO1; interaction with ROBO1 impairs interaction with RHOA and subsequent activation of RHOA GTPase activity, and thereby leads to increased levels of active, GTP-bound RHOA. The sequence is that of Unconventional myosin-IXb (MYO9B) from Homo sapiens (Human).